The following is a 944-amino-acid chain: Calcium-transporting ATPase type 2C member 2 (944 aa).

The Cytoplasmic segment spans residues 1–104 (MGRRFKFLQK…DNTEPVWKKY (104 aa)). The interaction with ORAI1 stretch occupies residues 69 to 93 (VDLDSGLSEFAVAQRRLVHGWNEFV). Residues 105–125 (LDQFRNPLILLLLGSSVVSVL) form a helical membrane-spanning segment. The Extracellular portion of the chain corresponds to 126-127 (TK). The helical transmembrane segment at 128 to 148 (EYEDAISIALAVLIVVTVGFI) threads the bilayer. The Cytoplasmic segment spans residues 149-229 (QEYRSEKSLE…EVEPCSKTDS (81 aa)). Residues 230–250 (PLAGGGDLSTLSNVVFMGTLV) form a helical membrane-spanning segment. The Extracellular segment spans residues 251–291 (QCGKGQGVVIGTGEQSQFGEVFKMMRAEETPKTPLQKSMDK). Residue Thr262 is modified to Phosphothreonine. Ser266 carries the post-translational modification Phosphoserine. The chain crosses the membrane as a helical span at residues 292–312 (LGKQLTVFSFGIIGLLMLVGW). Topologically, residues 313–329 (VQGKPLLSMFTIGVSLA) are cytoplasmic. 4 residues coordinate Ca(2+): Val330, Ala331, Ile333, and Glu335. Residues 330–350 (VAAIPEGLPIVVMVTLVLGVL) form a helical membrane-spanning segment. Over 351 to 748 (RMAKKRVIVK…IAALSLITLS (398 aa)) the chain is Extracellular. Asp377 serves as the catalytic 4-aspartylphosphate intermediate. Positions 672 and 676 each coordinate Mg(2+). The chain crosses the membrane as a helical span at residues 749–769 (TVCNLPNPLNAMQILWVNIIM). Ca(2+) is bound by residues Asn766 and Asp770. Residues 770-802 (DGPPAQSLGVEPVDRDALKRPPRSVKDTILNRA) lie on the Cytoplasmic side of the membrane. The chain crosses the membrane as a helical span at residues 803 to 823 (LILKILMSAAVILGGTLFIFW). Residues 824-835 (REIPENRTSTPR) lie on the Extracellular side of the membrane. A helical transmembrane segment spans residues 836–853 (TTTMAFTCFVFFDLFNAL). Topologically, residues 854–872 (SCRSQTKLIFEIGFFRNRM) are cytoplasmic. Residues 873–893 (FLYSILGSLLGQLAVIYAPPL) form a helical membrane-spanning segment. The Extracellular portion of the chain corresponds to 894–903 (QKVFQTENLS). Residues 904–924 (ALDLLLLTGLASSVFILSELL) traverse the membrane as a helical segment. The Cytoplasmic segment spans residues 925-944 (KLCEKFCSRAKADQMLPEAV).

This sequence belongs to the cation transport ATPase (P-type) (TC 3.A.3) family. Type IIA subfamily. Interacts (via N-terminus) with ORAI1 (via N- and C-termini); this interaction regulates Ca(2+) influx at the plasma membrane.

The protein resides in the golgi apparatus. Its subcellular location is the trans-Golgi network membrane. It is found in the cell membrane. It localises to the basolateral cell membrane. It carries out the reaction Ca(2+)(in) + ATP + H2O = Ca(2+)(out) + ADP + phosphate + H(+). The enzyme catalyses Mn(2+)(in) + ATP + H2O = Mn(2+)(out) + ADP + phosphate + H(+). In terms of biological role, ATP-driven pump that supplies the Golgi apparatus with Ca(2+) and Mn(2+) ions, both essential cofactors for processing and trafficking of newly synthesized proteins in the secretory pathway. Within a catalytic cycle, acquires Ca(2+) or Mn(2+) ions on the cytoplasmic side of the membrane and delivers them to the lumenal side. The transfer of ions across the membrane is coupled to ATP hydrolysis and is associated with a transient phosphorylation that shifts the pump conformation from inward-facing to outward-facing state. Induces Ca(2+) influx independently of its ATP-driven pump function. At the basolateral membrane of mammary epithelial cells, interacts with Ca(2+) channel ORAI1 and mediates Ca(2+) entry independently of the Ca(2+) content of endoplasmic reticulum or Golgi stores. May facilitate transepithelial transport of large quantities of Ca(2+) for milk secretion via activation of Ca(2+) influx channels at the plasma membrane and active Ca(2+) transport at the Golgi apparatus. This chain is Calcium-transporting ATPase type 2C member 2 (Atp2c2), found in Rattus norvegicus (Rat).